A 207-amino-acid chain; its full sequence is Thiamine-phosphate synthase (207 aa).

Residues Gln-37–Lys-41 and Asn-69 contribute to the 4-amino-2-methyl-5-(diphosphooxymethyl)pyrimidine site. Asp-70 and Asp-89 together coordinate Mg(2+). Residue Ser-108 coordinates 4-amino-2-methyl-5-(diphosphooxymethyl)pyrimidine. Residue Ser-135 to Thr-137 participates in 2-[(2R,5Z)-2-carboxy-4-methylthiazol-5(2H)-ylidene]ethyl phosphate binding. Residue Lys-138 coordinates 4-amino-2-methyl-5-(diphosphooxymethyl)pyrimidine. Gly-164 contributes to the 2-[(2R,5Z)-2-carboxy-4-methylthiazol-5(2H)-ylidene]ethyl phosphate binding site.

This sequence belongs to the thiamine-phosphate synthase family. Mg(2+) serves as cofactor.

It catalyses the reaction 2-[(2R,5Z)-2-carboxy-4-methylthiazol-5(2H)-ylidene]ethyl phosphate + 4-amino-2-methyl-5-(diphosphooxymethyl)pyrimidine + 2 H(+) = thiamine phosphate + CO2 + diphosphate. The enzyme catalyses 2-(2-carboxy-4-methylthiazol-5-yl)ethyl phosphate + 4-amino-2-methyl-5-(diphosphooxymethyl)pyrimidine + 2 H(+) = thiamine phosphate + CO2 + diphosphate. The catalysed reaction is 4-methyl-5-(2-phosphooxyethyl)-thiazole + 4-amino-2-methyl-5-(diphosphooxymethyl)pyrimidine + H(+) = thiamine phosphate + diphosphate. It participates in cofactor biosynthesis; thiamine diphosphate biosynthesis; thiamine phosphate from 4-amino-2-methyl-5-diphosphomethylpyrimidine and 4-methyl-5-(2-phosphoethyl)-thiazole: step 1/1. In terms of biological role, condenses 4-methyl-5-(beta-hydroxyethyl)thiazole monophosphate (THZ-P) and 2-methyl-4-amino-5-hydroxymethyl pyrimidine pyrophosphate (HMP-PP) to form thiamine monophosphate (TMP). This is Thiamine-phosphate synthase from Chromobacterium violaceum (strain ATCC 12472 / DSM 30191 / JCM 1249 / CCUG 213 / NBRC 12614 / NCIMB 9131 / NCTC 9757 / MK).